The sequence spans 168 residues: Luminal-binding protein 3 (168 aa).

A glycan (N-linked (GlcNAc...) asparagine) is linked at N120. Residues 148–168 (QRSGGASGGSSSSEEDGHDEL) are disordered. The Prevents secretion from ER motif lies at 165–168 (HDEL).

The protein belongs to the heat shock protein 70 family.

Its subcellular location is the endoplasmic reticulum lumen. Probably plays a role in facilitating the assembly of multimeric protein complexes inside the ER. This chain is Luminal-binding protein 3 (BIP3), found in Nicotiana tabacum (Common tobacco).